The primary structure comprises 376 residues: Small RNA 2'-O-methyltransferase (376 aa).

S-adenosyl-L-methionine is bound by residues threonine 49, aspartate 67, and serine 103. Positions 121, 124, 125, and 171 each coordinate Mg(2+).

Belongs to the methyltransferase superfamily. HEN1 family. It depends on Mg(2+) as a cofactor.

It localises to the cytoplasm. The catalysed reaction is small RNA 3'-end nucleotide + S-adenosyl-L-methionine = small RNA 3'-end 2'-O-methylnucleotide + S-adenosyl-L-homocysteine + H(+). Methyltransferase that adds a 2'-O-methyl group at the 3'-end of piRNAs, a class of 24 to 30 nucleotide RNAs that are generated by a Dicer-independent mechanism and are primarily derived from transposons and other repeated sequence elements. This probably protects the 3'-end of piRNAs from uridylation activity and subsequent degradation. Stabilization of piRNAs is essential for gametogenesis. The polypeptide is Small RNA 2'-O-methyltransferase (HENMT1) (Gallus gallus (Chicken)).